Consider the following 96-residue polypeptide: Probable quinol oxidase subunit 4 (96 aa).

3 consecutive transmembrane segments (helical) span residues 8 to 28 (TVGFIASIVLTLLAVYVTLYT), 36 to 56 (LTIIFGFAFVQAGLQLLMFMH), and 68 to 88 (FKVIFALVITLCFVVGTYWVM).

Belongs to the cytochrome c oxidase bacterial subunit 4 family.

The protein localises to the cell membrane. The enzyme catalyses 2 a quinol + O2 = 2 a quinone + 2 H2O. In terms of biological role, catalyzes quinol oxidation with the concomitant reduction of oxygen to water. The chain is Probable quinol oxidase subunit 4 (qoxD) from Staphylococcus aureus (strain USA300).